An 84-amino-acid chain; its full sequence is Small ribosomal subunit protein uS17 (84 aa).

This sequence belongs to the universal ribosomal protein uS17 family. In terms of assembly, part of the 30S ribosomal subunit.

One of the primary rRNA binding proteins, it binds specifically to the 5'-end of 16S ribosomal RNA. This Erwinia tasmaniensis (strain DSM 17950 / CFBP 7177 / CIP 109463 / NCPPB 4357 / Et1/99) protein is Small ribosomal subunit protein uS17.